We begin with the raw amino-acid sequence, 198 residues long: Transcription factor FapR (198 aa).

Residues 102 to 168 form the MaoC-like domain; that stretch reads TRIARGHHLF…GRTVVDVNSY (67 aa).

It belongs to the FapR family.

Its function is as follows. Transcriptional factor involved in regulation of membrane lipid biosynthesis by repressing genes involved in fatty acid and phospholipid metabolism. The sequence is that of Transcription factor FapR from Geobacillus thermodenitrificans (strain NG80-2).